Reading from the N-terminus, the 236-residue chain is MAATRAAPKTASKKEHQYCLLDSQEKRHGHYPFSFELKPYGQTGANIIGVQGSLTHVIKMTVFPFMIPFPLQKIHIDDFIGGRVYLFFKELDVQAISDVNGMQYHFEFKVVPVSSNQVELLPVNNKYKFTYAIPEVQYLTPIFYDLSGPLNFPLDTLSVHVDSLTNHIQLPIQNHNLTTGDRVFISGYKHLQTIELCKNNKIFIKCIPPLSSEKIKLYIPKNRIRIPLYFKSLKNV.

The protein belongs to the asfivirus H240R family.

The protein resides in the virion. In terms of biological role, forms the penton at the fivefold vertices of the icosahedral capsid. Together with the minor capsid proteins (p17, p49, and M1249L), forms a complicated network immediately below the outer capsid shell, stabilizing the whole capsid. The protein is Penton protein H240R of African swine fever virus (isolate Warthog/Namibia/Wart80/1980) (ASFV).